The following is a 72-amino-acid chain: Cell division protein ZapB (72 aa).

The stretch at 1–71 (MSLEILDQLE…LRSLLGRIDN (71 aa)) forms a coiled coil. Positions 36-56 (LSRQTNEQLRSENEHLKTEHH) are disordered. The segment covering 44 to 56 (LRSENEHLKTEHH) has biased composition (basic and acidic residues).

The protein belongs to the ZapB family. Homodimer. The ends of the coiled-coil dimer bind to each other, forming polymers. Interacts with FtsZ.

It localises to the cytoplasm. Non-essential, abundant cell division factor that is required for proper Z-ring formation. It is recruited early to the divisome by direct interaction with FtsZ, stimulating Z-ring assembly and thereby promoting cell division earlier in the cell cycle. Its recruitment to the Z-ring requires functional FtsA or ZipA. This is Cell division protein ZapB from Histophilus somni (strain 129Pt) (Haemophilus somnus).